The chain runs to 394 residues: Fructose-bisphosphate aldolase, chloroplastic (394 aa).

The N-terminal 46 residues, 1–46, are a transit peptide targeting the chloroplast; it reads MASASLLKTSPVLDNPEFLKGQTLRIPSVAGVRFTPSGSSSLTVRA. Substrate-binding residues include Arg93 and Lys183. Glu223 functions as the Proton acceptor in the catalytic mechanism. Catalysis depends on Lys265, which acts as the Schiff-base intermediate with dihydroxyacetone-P.

This sequence belongs to the class I fructose-bisphosphate aldolase family.

It is found in the plastid. The protein localises to the chloroplast. The enzyme catalyses beta-D-fructose 1,6-bisphosphate = D-glyceraldehyde 3-phosphate + dihydroxyacetone phosphate. It participates in carbohydrate degradation; glycolysis; D-glyceraldehyde 3-phosphate and glycerone phosphate from D-glucose: step 4/4. This chain is Fructose-bisphosphate aldolase, chloroplastic, found in Spinacia oleracea (Spinach).